The following is a 359-amino-acid chain: NF-kappa-B inhibitor beta (359 aa).

A phosphoserine; by RPS6KA1 mark is found at Ser-19 and Ser-23. 6 ANK repeats span residues 57–86, 93–122, 126–155, 206–235, 240–269, and 273–302; these read DGDT…GTEY, LGQT…GVLV, GGHT…SHPR, DGHT…DLNK, CGRT…DPTA, and GGRT…PEPE. The tract at residues 153-192 is disordered; it reads HPRDASDTYLTQSQDHTPDTSHAPVATDPQPNPGNEEELR. Over residues 298–308 the composition is skewed to basic and acidic residues; the sequence is APEPEDKDDKL. The tract at residues 298 to 359 is disordered; sequence APEPEDKDDK…KPLPDDPNPA (62 aa). Ser-318 is subject to Phosphoserine. The span at 318–331 shows a compositional bias: acidic residues; sequence SDSDNRDEGDEYDD. Residues 342–359 show a composition bias toward pro residues; the sequence is QPPPSPAAKPLPDDPNPA.

Belongs to the NF-kappa-B inhibitor family. In terms of assembly, interacts with THRB (via ligand-binding domain). Interacts with RELA and REL. Interacts with COMMD1. Interacts with inhibitor kappa B-interacting Ras-like NKIRAS1 and NKIRAS2. In terms of processing, phosphorylated by RPS6KA1; followed by degradation. Interaction with NKIRAS1 and NKIRAS2 probably prevents phosphorylation.

The protein resides in the cytoplasm. It localises to the nucleus. Functionally, inhibits NF-kappa-B by complexing with and trapping it in the cytoplasm. However, the unphosphorylated form resynthesized after cell stimulation is able to bind NF-kappa-B allowing its transport to the nucleus and protecting it to further NFKBIA-dependent inactivation. Association with inhibitor kappa B-interacting NKIRAS1 and NKIRAS2 prevent its phosphorylation rendering it more resistant to degradation, explaining its slower degradation. This chain is NF-kappa-B inhibitor beta (Nfkbib), found in Rattus norvegicus (Rat).